The primary structure comprises 115 residues: Parathyroid hormone (115 aa).

The signal sequence occupies residues 1–25 (MIPAKDMAKVMIVMLAICFLTKSDG). A propeptide spanning residues 26-31 (KSVKKR) is cleaved from the precursor. The interval 51–69 (RVEWLRKKLQDVHNFVALG) is important for receptor binding. The disordered stretch occupies residues 73–115 (APRDAGSQRPRKKEDNVLVESHEKSLGEADKADVNVLTKAKSQ). The span at 84 to 105 (KKEDNVLVESHEKSLGEADKAD) shows a compositional bias: basic and acidic residues.

The protein belongs to the parathyroid hormone family. As to quaternary structure, interacts with PTH1R (via N-terminal extracellular domain).

The protein resides in the secreted. Functionally, parathyroid hormone elevates calcium level by dissolving the salts in bone and preventing their renal excretion. Acts by binding to its receptor, PTH1R, activating G protein-coupled receptor signaling. Stimulates [1-14C]-2-deoxy-D-glucose (2DG) transport and glycogen synthesis in osteoblastic cells. The polypeptide is Parathyroid hormone (Homo sapiens (Human)).